The chain runs to 79 residues: Defensin 2 (79 aa).

Residues Val-1–Gly-32 form the signal peptide. 3 disulfides stabilise this stretch: Cys-35–Cys-79, Cys-46–Cys-67, and Cys-52–Cys-73.

Belongs to the DEFL family. May form dimers. Post-translationally, not glycosylated. Has 4 disulfide bonds.

Its function is as follows. Probably has antifungal activity. This Arachis hypogaea (Peanut) protein is Defensin 2.